A 275-amino-acid chain; its full sequence is Transcriptional coregulator psa-3 (275 aa).

Residues 91–161 (TDDIKRLFQS…RRTVCHEALV (71 aa)) enclose the MEIS N-terminal domain. The tract at residues 239–275 (QLPPNFLKPSNEKSPEKSEEEKSQKPSSSPKSPSLSD) is disordered. Residues 248-262 (SNEKSPEKSEEEKSQ) show a composition bias toward basic and acidic residues. Low complexity predominate over residues 263 to 275 (KPSSSPKSPSLSD).

In terms of assembly, interacts with homeobox protein ceh-20; the interaction is direct, facilitates nuclear localization of ceh-20 and may stabilize interaction of a ceh-20-nob-1 complex with DNA.

The protein resides in the nucleus. Probable transcription coregulator. Required for asymmetric cell divisions of the T hypodermal cells, and cell fate determination, in concert with homeobox proteins nob-1 and ceh-20. Acts downstream of the Wnt signaling pathway, and of ceh-20 and nob-1. The sequence is that of Transcriptional coregulator psa-3 from Caenorhabditis elegans.